The primary structure comprises 383 residues: tRNA-specific 2-thiouridylase MnmA (383 aa).

Residues A10 to S17 and M36 contribute to the ATP site. C107 acts as the Nucleophile in catalysis. The cysteines at positions 107 and 206 are disulfide-linked. G131 contributes to the ATP binding site. An interaction with tRNA region spans residues K155–Q157. The active-site Cysteine persulfide intermediate is C206. The interaction with tRNA stretch occupies residues R315–Y316.

Belongs to the MnmA/TRMU family.

The protein resides in the cytoplasm. The catalysed reaction is S-sulfanyl-L-cysteinyl-[protein] + uridine(34) in tRNA + AH2 + ATP = 2-thiouridine(34) in tRNA + L-cysteinyl-[protein] + A + AMP + diphosphate + H(+). In terms of biological role, catalyzes the 2-thiolation of uridine at the wobble position (U34) of tRNA, leading to the formation of s(2)U34. This is tRNA-specific 2-thiouridylase MnmA from Salinibacter ruber (strain DSM 13855 / M31).